Here is a 510-residue protein sequence, read N- to C-terminus: UDP-galactopyranose mutase (510 aa).

FAD-binding residues include Thr18, Asp38, Leu46, and Gly61. Residues Gly61 and Gly62 each contribute to the UDP-alpha-D-galactose site. His63 is an FAD binding site. Residues His68, Arg91, and Ser93 each coordinate NADH. NADPH contacts are provided by His68, Arg91, Ser93, and Tyr104. UDP-alpha-D-galactose contacts are provided by Tyr104, Gln107, Met159, Tyr162, Asn163, Trp167, and Arg182. Residue Asn203 coordinates NADPH. Asn207 is a UDP-alpha-D-galactose binding site. Val242 is an FAD binding site. Positions 315 and 317 each coordinate NADPH. Residues Tyr317, Arg327, and Tyr419 each coordinate UDP-alpha-D-galactose. An FAD-binding site is contributed by Arg327. NADH-binding residues include Tyr419 and Arg447. NADPH-binding residues include Tyr419 and Arg447. Position 447 (Arg447) interacts with FAD. A UDP-alpha-D-galactose-binding site is contributed by Tyr453. FAD-binding residues include Gly456, Asn457, and Gln458. Asn457 is a binding site for UDP-alpha-D-galactose. Asn457 contacts NADH. Residue Asn457 participates in NADPH binding. NADPH is bound at residue His460. Ser461 is an FAD binding site.

It belongs to the UDP-galactopyranose/dTDP-fucopyranose mutase family. As to quaternary structure, homotetramer. FAD serves as cofactor.

It catalyses the reaction UDP-alpha-D-galactose = UDP-alpha-D-galactofuranose. Its function is as follows. UDP-galactopyranose mutase, key flavoenzyme of galactofuranose metabolism that catalyzes the 6-to-5 ring contraction of UDP-galactopyranose to UDP-galactofuranose, the donor used by various galacto-furanosyltransferases. Controls the biosynthesis of galactomannan and galactofuranose containing glycoconjugates. The flavin functions as nucleophile, forming a flavin-sugar adduct that facilitates galactose-ring opening and contraction. The binding of UDP-galactopyranose induces profound conformational changes in the enzyme and two loops on opposite sides of the active site move toward each other by over 10 Angstroms to cover the substrate and create a closed active site. This Aspergillus fumigatus (Neosartorya fumigata) protein is UDP-galactopyranose mutase.